Consider the following 509-residue polypeptide: Maturase K (509 aa).

Belongs to the intron maturase 2 family. MatK subfamily.

It localises to the plastid. The protein resides in the chloroplast. In terms of biological role, usually encoded in the trnK tRNA gene intron. Probably assists in splicing its own and other chloroplast group II introns. In Nicotiana glutinosa (Tobacco), this protein is Maturase K.